A 254-amino-acid chain; its full sequence is Triosephosphate isomerase (254 aa).

10–12 (NWK) contributes to the substrate binding site. His99 acts as the Electrophile in catalysis. Residue Glu169 is the Proton acceptor of the active site. Residues Gly175, Ser215, and 236–237 (GG) each bind substrate.

This sequence belongs to the triosephosphate isomerase family. In terms of assembly, homodimer.

Its subcellular location is the cytoplasm. It carries out the reaction D-glyceraldehyde 3-phosphate = dihydroxyacetone phosphate. Its pathway is carbohydrate biosynthesis; gluconeogenesis. It participates in carbohydrate degradation; glycolysis; D-glyceraldehyde 3-phosphate from glycerone phosphate: step 1/1. Its function is as follows. Involved in the gluconeogenesis. Catalyzes stereospecifically the conversion of dihydroxyacetone phosphate (DHAP) to D-glyceraldehyde-3-phosphate (G3P). The chain is Triosephosphate isomerase from Chlamydia abortus (strain DSM 27085 / S26/3) (Chlamydophila abortus).